Consider the following 186-residue polypeptide: Large ribosomal subunit protein uL5 (186 aa).

The protein belongs to the universal ribosomal protein uL5 family. As to quaternary structure, part of the 50S ribosomal subunit; part of the 5S rRNA/L5/L18/L25 subcomplex. Contacts the 5S rRNA and the P site tRNA. Forms a bridge to the 30S subunit in the 70S ribosome.

In terms of biological role, this is one of the proteins that bind and probably mediate the attachment of the 5S RNA into the large ribosomal subunit, where it forms part of the central protuberance. In the 70S ribosome it contacts protein S13 of the 30S subunit (bridge B1b), connecting the 2 subunits; this bridge is implicated in subunit movement. Contacts the P site tRNA; the 5S rRNA and some of its associated proteins might help stabilize positioning of ribosome-bound tRNAs. The protein is Large ribosomal subunit protein uL5 of Porphyromonas gingivalis (strain ATCC 33277 / DSM 20709 / CIP 103683 / JCM 12257 / NCTC 11834 / 2561).